Reading from the N-terminus, the 246-residue chain is Small ribosomal subunit protein uS2 (246 aa).

Belongs to the universal ribosomal protein uS2 family.

The chain is Small ribosomal subunit protein uS2 from Chromohalobacter salexigens (strain ATCC BAA-138 / DSM 3043 / CIP 106854 / NCIMB 13768 / 1H11).